A 324-amino-acid polypeptide reads, in one-letter code: Elongation factor P--(R)-beta-lysine ligase (324 aa).

75–77 serves as a coordination point for substrate; that stretch reads SPE. ATP contacts are provided by residues 99–101 and Asn-108; that span reads RNK. A substrate-binding site is contributed by Tyr-117. 243-244 contributes to the ATP binding site; sequence EL. Glu-250 provides a ligand contact to substrate. Gly-299 contributes to the ATP binding site.

Belongs to the class-II aminoacyl-tRNA synthetase family. EpmA subfamily. Homodimer.

The catalysed reaction is D-beta-lysine + L-lysyl-[protein] + ATP = N(6)-((3R)-3,6-diaminohexanoyl)-L-lysyl-[protein] + AMP + diphosphate + H(+). Functionally, with EpmB is involved in the beta-lysylation step of the post-translational modification of translation elongation factor P (EF-P). Catalyzes the ATP-dependent activation of (R)-beta-lysine produced by EpmB, forming a lysyl-adenylate, from which the beta-lysyl moiety is then transferred to the epsilon-amino group of a conserved specific lysine residue in EF-P. The chain is Elongation factor P--(R)-beta-lysine ligase from Buchnera aphidicola subsp. Acyrthosiphon pisum (strain APS) (Acyrthosiphon pisum symbiotic bacterium).